Here is a 229-residue protein sequence, read N- to C-terminus: Small ribosomal subunit protein uS5 (229 aa).

The S5 DRBM domain occupies 61 to 124 (LEEQVLDVKL…AHAKLSLIKV (64 aa)).

It belongs to the universal ribosomal protein uS5 family. Part of the 30S ribosomal subunit. Contacts protein S4.

Its function is as follows. With S4 and S12 plays an important role in translational accuracy. This chain is Small ribosomal subunit protein uS5, found in Methanococcus maripaludis (strain C6 / ATCC BAA-1332).